Consider the following 940-residue polypeptide: Isoleucine--tRNA ligase (940 aa).

Residues 58–68 (PYANGSIHIGH) carry the 'HIGH' region motif. L-isoleucyl-5'-AMP is bound at residue Glu-564. Residues 605–609 (KMSKS) carry the 'KMSKS' region motif. Lys-608 serves as a coordination point for ATP. 4 residues coordinate Zn(2+): Cys-903, Cys-906, Cys-923, and Cys-926.

This sequence belongs to the class-I aminoacyl-tRNA synthetase family. IleS type 1 subfamily. In terms of assembly, monomer. Zn(2+) is required as a cofactor.

The protein localises to the cytoplasm. It carries out the reaction tRNA(Ile) + L-isoleucine + ATP = L-isoleucyl-tRNA(Ile) + AMP + diphosphate. In terms of biological role, catalyzes the attachment of isoleucine to tRNA(Ile). As IleRS can inadvertently accommodate and process structurally similar amino acids such as valine, to avoid such errors it has two additional distinct tRNA(Ile)-dependent editing activities. One activity is designated as 'pretransfer' editing and involves the hydrolysis of activated Val-AMP. The other activity is designated 'posttransfer' editing and involves deacylation of mischarged Val-tRNA(Ile). In Shewanella woodyi (strain ATCC 51908 / MS32), this protein is Isoleucine--tRNA ligase.